Consider the following 540-residue polypeptide: ATP-dependent RNA helicase DBP5 (540 aa).

Basic and acidic residues-rich tracts occupy residues 24–36 (KSGEKLEEIKKGS) and 50–119 (KEGD…EPKE). Positions 24–124 (KSGEKLEEIK…KEPKEPATNL (101 aa)) are disordered. A Q motif motif is present at residues 150-178 (KSFEELGLSPELLKGLYAMKFNKPSKIQE). In terms of domain architecture, Helicase ATP-binding spans 183–350 (LLLSNPPRNM…ERLVPDANSL (168 aa)). ATP is bound at residue 196–203 (SQSGTGKT). Residues 297 to 300 (DEAD) carry the DEAD box motif. In terms of domain architecture, Helicase C-terminal spans 361 to 538 (GIKQLYMDCR…EVEKIVKKVI (178 aa)).

Belongs to the DEAD box helicase family. DDX19/DBP5 subfamily. Associates with the nuclear pore complex.

It is found in the cytoplasm. It localises to the nucleus. The protein resides in the nuclear pore complex. Its subcellular location is the nucleus membrane. The catalysed reaction is ATP + H2O = ADP + phosphate + H(+). In terms of biological role, ATP-dependent RNA helicase associated with the nuclear pore complex and essential for mRNA export from the nucleus. May participate in a terminal step of mRNA export through the removal of proteins that accompany mRNA through the nucleopore complex. May also be involved in early transcription. The sequence is that of ATP-dependent RNA helicase DBP5 (DBP5) from Candida albicans (strain SC5314 / ATCC MYA-2876) (Yeast).